Reading from the N-terminus, the 283-residue chain is ATP synthase gamma chain (283 aa).

Belongs to the ATPase gamma chain family. As to quaternary structure, F-type ATPases have 2 components, CF(1) - the catalytic core - and CF(0) - the membrane proton channel. CF(1) has five subunits: alpha(3), beta(3), gamma(1), delta(1), epsilon(1). CF(0) has three main subunits: a, b and c.

It localises to the cell membrane. Its function is as follows. Produces ATP from ADP in the presence of a proton gradient across the membrane. The gamma chain is believed to be important in regulating ATPase activity and the flow of protons through the CF(0) complex. This chain is ATP synthase gamma chain, found in Exiguobacterium sibiricum (strain DSM 17290 / CCUG 55495 / CIP 109462 / JCM 13490 / 255-15).